Here is a 147-residue protein sequence, read N- to C-terminus: Deoxyuridine 5'-triphosphate nucleotidohydrolase (147 aa).

A Mg(2+)-binding site is contributed by arginine 24. DUTP-binding positions include 68-70, 82-85, tyrosine 88, glycine 93, isoleucine 95, and arginine 111; these read PRS and GVID.

The protein belongs to the dUTPase family.

The catalysed reaction is dUTP + H2O = dUMP + diphosphate + H(+). Functionally, this enzyme is involved in nucleotide metabolism: it produces dUMP, the immediate precursor of thymidine nucleotides and it decreases the intracellular concentration of dUTP so that uracil cannot be incorporated into DNA. This Homo sapiens (Human) protein is Deoxyuridine 5'-triphosphate nucleotidohydrolase (OPG046).